Here is a 699-residue protein sequence, read N- to C-terminus: Homeobox-leucine zipper protein HDG8 (699 aa).

Residues 1 to 31 (MDNNGGGSSGNEQYTSGDAKQNGKRTCHRHT) form a disordered region. The span at 10 to 19 (GNEQYTSGDA) shows a compositional bias: polar residues. Residues 22 to 31 (NGKRTCHRHT) show a composition bias toward basic residues. The segment at residues 23–82 (GKRTCHRHTPQQIQRLEAYFKECPHPDERQRNQLCRELKLEPDQIKFWFQNKRTQSKTQE) is a DNA-binding region (homeobox). Residues 89–149 (LLRGENETLQ…LKDHRDRISN (61 aa)) adopt a coiled-coil conformation. The 235-residue stretch at 204–438 (AETDMSLLSE…LERMCERMAL (235 aa)) folds into the START domain.

The protein belongs to the HD-ZIP homeobox family. Class IV subfamily. Interacts with ANT. In terms of tissue distribution, expressed in the embryo at early stage and in the endosperm.

Its subcellular location is the nucleus. In terms of biological role, probable transcription factor. The sequence is that of Homeobox-leucine zipper protein HDG8 from Arabidopsis thaliana (Mouse-ear cress).